The chain runs to 362 residues: Serine/threonine-protein kinase-like protein At3g51990 (362 aa).

Positions methionine 1–glycine 24 are cleaved as a signal peptide. Positions serine 21 to alanine 32 are enriched in low complexity. The tract at residues serine 21–arginine 43 is disordered. Positions phenylalanine 59–leucine 329 constitute a Protein kinase domain. ATP is bound by residues leucine 65 to valine 73 and lysine 86. An N-linked (GlcNAc...) asparagine glycan is attached at asparagine 136. Catalysis depends on aspartate 185, which acts as the Proton acceptor. Phosphoserine is present on serine 219. Residues threonine 220 and threonine 225 each carry the phosphothreonine modification. At tyrosine 233 the chain carries Phosphotyrosine.

The protein belongs to the protein kinase superfamily. Ser/Thr protein kinase family.

The protein resides in the secreted. The catalysed reaction is L-seryl-[protein] + ATP = O-phospho-L-seryl-[protein] + ADP + H(+). It catalyses the reaction L-threonyl-[protein] + ATP = O-phospho-L-threonyl-[protein] + ADP + H(+). The polypeptide is Serine/threonine-protein kinase-like protein At3g51990 (Arabidopsis thaliana (Mouse-ear cress)).